The primary structure comprises 337 residues: DNA-directed RNA polymerase subunit alpha (337 aa).

An alpha N-terminal domain (alpha-NTD) region spans residues 1 to 233 (MVREKVTVST…DLFIPFLHAQ (233 aa)). The segment at 267 to 337 (IALKYIFIDQ…FTVDLPKNKF (71 aa)) is alpha C-terminal domain (alpha-CTD).

Belongs to the RNA polymerase alpha chain family. In plastids the minimal PEP RNA polymerase catalytic core is composed of four subunits: alpha, beta, beta', and beta''. When a (nuclear-encoded) sigma factor is associated with the core the holoenzyme is formed, which can initiate transcription.

Its subcellular location is the plastid. The protein resides in the chloroplast. It carries out the reaction RNA(n) + a ribonucleoside 5'-triphosphate = RNA(n+1) + diphosphate. In terms of biological role, DNA-dependent RNA polymerase catalyzes the transcription of DNA into RNA using the four ribonucleoside triphosphates as substrates. The sequence is that of DNA-directed RNA polymerase subunit alpha from Platanus occidentalis (Sycamore).